Consider the following 293-residue polypeptide: Acetyl-coenzyme A carboxylase carboxyl transferase subunit beta (293 aa).

The region spanning 29 to 293 (LWVKCSECSQ…GVKELAEANI (265 aa)) is the CoA carboxyltransferase N-terminal domain. Residues Cys33, Cys36, Cys52, and Cys55 each coordinate Zn(2+). Residues 33-55 (CSECSQVAYRKDLISNFNVCSNC) form a C4-type zinc finger.

Belongs to the AccD/PCCB family. As to quaternary structure, acetyl-CoA carboxylase is a heterohexamer composed of biotin carboxyl carrier protein (AccB), biotin carboxylase (AccC) and two subunits each of ACCase subunit alpha (AccA) and ACCase subunit beta (AccD). It depends on Zn(2+) as a cofactor.

It is found in the cytoplasm. The enzyme catalyses N(6)-carboxybiotinyl-L-lysyl-[protein] + acetyl-CoA = N(6)-biotinyl-L-lysyl-[protein] + malonyl-CoA. The protein operates within lipid metabolism; malonyl-CoA biosynthesis; malonyl-CoA from acetyl-CoA: step 1/1. Functionally, component of the acetyl coenzyme A carboxylase (ACC) complex. Biotin carboxylase (BC) catalyzes the carboxylation of biotin on its carrier protein (BCCP) and then the CO(2) group is transferred by the transcarboxylase to acetyl-CoA to form malonyl-CoA. The sequence is that of Acetyl-coenzyme A carboxylase carboxyl transferase subunit beta from Prochlorococcus marinus (strain MIT 9312).